Reading from the N-terminus, the 433-residue chain is UDP-N-acetylmuramate--L-alanine ligase (433 aa).

Residue 108–114 (GAHGKTS) coordinates ATP.

Belongs to the MurCDEF family.

The protein localises to the cytoplasm. The catalysed reaction is UDP-N-acetyl-alpha-D-muramate + L-alanine + ATP = UDP-N-acetyl-alpha-D-muramoyl-L-alanine + ADP + phosphate + H(+). It participates in cell wall biogenesis; peptidoglycan biosynthesis. Functionally, cell wall formation. This chain is UDP-N-acetylmuramate--L-alanine ligase, found in Anoxybacillus flavithermus (strain DSM 21510 / WK1).